The sequence spans 326 residues: Probable magnesium transporter NIPA7 (326 aa).

Residues Met1–Asp4 lie on the Extracellular side of the membrane. The chain crosses the membrane as a helical span at residues Asn5–Leu25. The Cytoplasmic portion of the chain corresponds to Lys26 to Pro51. A helical transmembrane segment spans residues Leu52–Val72. At Tyr73–Ala76 the chain is on the extracellular side. The helical transmembrane segment at Val77–Leu97 threads the bilayer. The Cytoplasmic portion of the chain corresponds to Leu98–Lys104. A helical transmembrane segment spans residues Met105–Pro125. Residues Gln126 to Gln142 lie on the Extracellular side of the membrane. The helical transmembrane segment at Pro143–Cys163 threads the bilayer. The Cytoplasmic segment spans residues Glu164 to Gln169. A helical membrane pass occupies residues Thr170–Ile190. The Extracellular segment spans residues Lys191–Tyr209. The chain crosses the membrane as a helical span at residues Pro210–Leu230. The Cytoplasmic segment spans residues Asn231–Ala240. A helical membrane pass occupies residues Ile241–Met261. The Extracellular segment spans residues Phe262–Ser272. A helical membrane pass occupies residues Ile273–Thr293. Over Arg294–Tyr326 the chain is Cytoplasmic.

The protein belongs to the NIPA (TC 2.A.7) family. As to quaternary structure, homodimer.

The protein resides in the cell membrane. It is found in the early endosome. In terms of biological role, acts as a Mg(2+) transporter. Can also transport other divalent cations such as Fe(2+), Sr(2+), Ba(2+), Mn(2+) and Co(2+) but to a much less extent than Mg(2+). This chain is Probable magnesium transporter NIPA7, found in Arabidopsis thaliana (Mouse-ear cress).